The following is a 410-amino-acid chain: Riboflavin biosynthesis protein RibBA (410 aa).

Residues 1–205 are DHBP synthase; the sequence is MENKRIDTIE…IKDLVAFQMR (205 aa). D-ribulose 5-phosphate contacts are provided by residues 30–31, aspartate 35, 144–148, and glutamate 168; these read RE and RVGHT. Glutamate 31 lines the Mg(2+) pocket. Histidine 147 is a binding site for Mg(2+). The interval 206-410 is GTP cyclohydrolase II; that stretch reads RSKLVQRAVE…ISCSCGSGNH (205 aa). Position 256–260 (256–260) interacts with GTP; it reads RVHSQ. 3 residues coordinate Zn(2+): cysteine 261, cysteine 272, and cysteine 274. GTP contacts are provided by residues glutamine 277, 299-301, and threonine 321; that span reads EGR. The active-site Proton acceptor; for GTP cyclohydrolase activity is aspartate 333. Arginine 335 functions as the Nucleophile; for GTP cyclohydrolase activity in the catalytic mechanism. GTP contacts are provided by threonine 356 and lysine 361.

The protein in the N-terminal section; belongs to the DHBP synthase family. It in the C-terminal section; belongs to the GTP cyclohydrolase II family. It depends on Mg(2+) as a cofactor. The cofactor is Mn(2+). Zn(2+) is required as a cofactor.

The enzyme catalyses D-ribulose 5-phosphate = (2S)-2-hydroxy-3-oxobutyl phosphate + formate + H(+). The catalysed reaction is GTP + 4 H2O = 2,5-diamino-6-hydroxy-4-(5-phosphoribosylamino)-pyrimidine + formate + 2 phosphate + 3 H(+). It participates in cofactor biosynthesis; riboflavin biosynthesis; 2-hydroxy-3-oxobutyl phosphate from D-ribulose 5-phosphate: step 1/1. Its pathway is cofactor biosynthesis; riboflavin biosynthesis; 5-amino-6-(D-ribitylamino)uracil from GTP: step 1/4. Catalyzes the conversion of D-ribulose 5-phosphate to formate and 3,4-dihydroxy-2-butanone 4-phosphate. In terms of biological role, catalyzes the conversion of GTP to 2,5-diamino-6-ribosylamino-4(3H)-pyrimidinone 5'-phosphate (DARP), formate and pyrophosphate. In Chlorobium phaeovibrioides (strain DSM 265 / 1930) (Prosthecochloris vibrioformis (strain DSM 265)), this protein is Riboflavin biosynthesis protein RibBA.